Consider the following 217-residue polypeptide: MNIDQSKIPQATAKRLPLYYRFLKNLHASGKQRVSSAELSDAVKVDSATIRRDFSYFGALGKKGYGYNVDYLLTFFRKTLDQDEMTNVMLIGVGNLGTAFLHYNFIKNNNTKISMAFDVNESKIGSEIGGVPVYDLDKLEEHVQEVGDIPVAILTVPAVAAQPITDRLIALGIKGILNFTPARLNVPEHIRIHHIDLAVELQSLVYFLKHYSITQED.

Positions 18–57 form a DNA-binding region, H-T-H motif; the sequence is LYYRFLKNLHASGKQRVSSAELSDAVKVDSATIRRDFSYF. 92 to 97 serves as a coordination point for NAD(+); the sequence is GVGNLG.

This sequence belongs to the transcriptional regulatory Rex family. Homodimer.

The protein localises to the cytoplasm. In terms of biological role, modulates transcription in response to changes in cellular NADH/NAD(+) redox state. This chain is Redox-sensing transcriptional repressor Rex, found in Bacillus pumilus (strain SAFR-032).